The following is a 378-amino-acid chain: Chaperone protein DnaJ (378 aa).

Residues 5 to 70 enclose the J domain; that stretch reads DYYEVLGVAK…QKRAAYDQYG (66 aa). The CR-type zinc finger occupies 138–216; that stretch reads GYDTQIRVPS…CHGSGKVKET (79 aa). 8 residues coordinate Zn(2+): cysteine 151, cysteine 154, cysteine 168, cysteine 171, cysteine 190, cysteine 193, cysteine 204, and cysteine 207. CXXCXGXG motif repeat units follow at residues 151 to 158, 168 to 175, 190 to 197, and 204 to 211; these read CEVCHGSG, CPTCHGQG, CPKCHGTG, and CAHCHGSG.

Belongs to the DnaJ family. In terms of assembly, homodimer. Requires Zn(2+) as cofactor.

The protein resides in the cytoplasm. In terms of biological role, participates actively in the response to hyperosmotic and heat shock by preventing the aggregation of stress-denatured proteins and by disaggregating proteins, also in an autonomous, DnaK-independent fashion. Unfolded proteins bind initially to DnaJ; upon interaction with the DnaJ-bound protein, DnaK hydrolyzes its bound ATP, resulting in the formation of a stable complex. GrpE releases ADP from DnaK; ATP binding to DnaK triggers the release of the substrate protein, thus completing the reaction cycle. Several rounds of ATP-dependent interactions between DnaJ, DnaK and GrpE are required for fully efficient folding. Also involved, together with DnaK and GrpE, in the DNA replication of plasmids through activation of initiation proteins. The protein is Chaperone protein DnaJ of Burkholderia cenocepacia (strain HI2424).